We begin with the raw amino-acid sequence, 222 residues long: Glutathione S-transferase A3 (222 aa).

Ala2 carries the N-acetylalanine modification. The region spanning 3–83 (GKPKLHYFNG…YIASKYNLYG (81 aa)) is the GST N-terminal domain. The residue at position 4 (Lys4) is an N6-succinyllysine. Glutathione contacts are provided by residues Tyr9, Arg45, 54–55 (QV), and 67–68 (QT). Residues 85 to 207 (DIKERALIDM…LQPGSPRKPP (123 aa)) enclose the GST C-terminal domain.

It belongs to the GST superfamily. Alpha family. As to quaternary structure, homodimer.

Its subcellular location is the cytoplasm. It catalyses the reaction RX + glutathione = an S-substituted glutathione + a halide anion + H(+). The enzyme catalyses androst-5-ene-3,17-dione = androst-4-ene-3,17-dione. It carries out the reaction pregn-5-ene-3,20-dione = progesterone. In terms of biological role, conjugation of reduced glutathione to a wide number of exogenous and endogenous hydrophobic electrophiles. Catalyzes isomerization reactions that contribute to the biosynthesis of steroid hormones. Efficiently catalyze obligatory double-bond isomerizations of delta(5)-androstene-3,17-dione and delta(5)-pregnene-3,20-dione, precursors to testosterone and progesterone, respectively. Has substantial activity toward aflatoxin B1-8,9-epoxide. The protein is Glutathione S-transferase A3 of Homo sapiens (Human).